Consider the following 134-residue polypeptide: Small ribosomal subunit protein uS8c (134 aa).

This sequence belongs to the universal ribosomal protein uS8 family. As to quaternary structure, part of the 30S ribosomal subunit.

Its subcellular location is the plastid. The protein localises to the chloroplast. One of the primary rRNA binding proteins, it binds directly to 16S rRNA central domain where it helps coordinate assembly of the platform of the 30S subunit. This chain is Small ribosomal subunit protein uS8c (rps8), found in Lepidium virginicum (Virginia pepperweed).